The primary structure comprises 398 residues: Phosphoglycerate kinase (398 aa).

Substrate contacts are provided by residues 21-23, arginine 36, 59-62, arginine 119, and arginine 157; these read DFN and HLGR. Residues lysine 208, glycine 296, glutamate 327, and 354–357 contribute to the ATP site; that span reads GGDS.

This sequence belongs to the phosphoglycerate kinase family. As to quaternary structure, monomer.

The protein localises to the cytoplasm. It carries out the reaction (2R)-3-phosphoglycerate + ATP = (2R)-3-phospho-glyceroyl phosphate + ADP. Its pathway is carbohydrate degradation; glycolysis; pyruvate from D-glyceraldehyde 3-phosphate: step 2/5. In Lactococcus lactis subsp. cremoris (strain SK11), this protein is Phosphoglycerate kinase.